The sequence spans 570 residues: Periplasmic trehalase (570 aa).

Residues 1–34 form the signal peptide; sequence MIPPEIRRSVLLQKAIKLALAGTLLTFASFSATA. Substrate-binding positions include Arg-159, 166–167, Asn-203, 212–214, 284–286, and Gly-317; these read WD, RSQ, and RPE. Catalysis depends on proton donor/acceptor residues Asp-319 and Glu-503. Glu-518 lines the substrate pocket. Residues 544–570 are disordered; it reads KPCDSVPSTRPASLSATPTKTPSAATQ. Residues 554–570 are compositionally biased toward low complexity; the sequence is PASLSATPTKTPSAATQ.

The protein belongs to the glycosyl hydrolase 37 family. Monomer.

Its subcellular location is the periplasm. It carries out the reaction alpha,alpha-trehalose + H2O = alpha-D-glucose + beta-D-glucose. In terms of biological role, provides the cells with the ability to utilize trehalose at high osmolarity by splitting it into glucose molecules that can subsequently be taken up by the phosphotransferase-mediated uptake system. The protein is Periplasmic trehalase of Salmonella choleraesuis (strain SC-B67).